A 164-amino-acid chain; its full sequence is Peptide deformylase (164 aa).

Fe cation-binding residues include cysteine 87 and histidine 129. Glutamate 130 is an active-site residue. Histidine 133 lines the Fe cation pocket.

The protein belongs to the polypeptide deformylase family. It depends on Fe(2+) as a cofactor.

It carries out the reaction N-terminal N-formyl-L-methionyl-[peptide] + H2O = N-terminal L-methionyl-[peptide] + formate. Removes the formyl group from the N-terminal Met of newly synthesized proteins. Requires at least a dipeptide for an efficient rate of reaction. N-terminal L-methionine is a prerequisite for activity but the enzyme has broad specificity at other positions. This Thermotoga sp. (strain RQ2) protein is Peptide deformylase.